Consider the following 225-residue polypeptide: Cytidylate kinase (225 aa).

Glycine 10 to threonine 18 lines the ATP pocket.

It belongs to the cytidylate kinase family. Type 1 subfamily.

Its subcellular location is the cytoplasm. The catalysed reaction is CMP + ATP = CDP + ADP. It carries out the reaction dCMP + ATP = dCDP + ADP. In Streptococcus gordonii (strain Challis / ATCC 35105 / BCRC 15272 / CH1 / DL1 / V288), this protein is Cytidylate kinase.